Consider the following 216-residue polypeptide: Ras-like protein (216 aa).

Residue 16-23 (GGGGVGKS) participates in GTP binding. The Effector region motif lies at 38-46 (YDPTIEDSY). GTP is bound by residues 63–67 (DTAGQ) and 122–125 (NKCD). Residues cysteine 209 and cysteine 210 are each lipidated (S-palmitoyl cysteine). Position 213 is a cysteine methyl ester (cysteine 213). Cysteine 213 carries S-geranylgeranyl cysteine lipidation. A propeptide spans 214–216 (VVL) (removed in mature form).

The protein belongs to the small GTPase superfamily. Ras family.

Its subcellular location is the cell membrane. It catalyses the reaction GTP + H2O = GDP + phosphate + H(+). Alternates between an inactive form bound to GDP and an active form bound to GTP. Activated by a guanine nucleotide-exchange factor (GEF) and inactivated by a GTPase-activating protein (GAP). In Cryptococcus neoformans var. neoformans serotype D (strain B-3501A) (Filobasidiella neoformans), this protein is Ras-like protein (RAS1).